A 419-amino-acid polypeptide reads, in one-letter code: Probable pectate lyase C (419 aa).

An N-terminal signal peptide occupies residues 1-19; sequence MRLGIALFSLIGLCHSVSA. N-linked (GlcNAc...) asparagine glycosylation is found at Asn48, Asn164, and Asn201. The active site involves Arg204. The 36-residue stretch at 261 to 296 folds into the EF-hand domain; that stretch reads NEYFHGYVETNYYDPDRDGTLNGNELGVSASNYGGM. Residues Asp274, Asp276, Asp278, Thr280, and Glu285 each contribute to the Ca(2+) site. Residues 350 to 395 form a disordered region; the sequence is ELISDEASMGGPGDLDGGSPPTDSDGDGIPDDAETEIGSDPNTADS. The segment covering 373-386 has biased composition (acidic residues); that stretch reads SDGDGIPDDAETEI.

Belongs to the polysaccharide lyase 1 family. The cofactor is Ca(2+).

The protein resides in the secreted. It catalyses the reaction Eliminative cleavage of (1-&gt;4)-alpha-D-galacturonan to give oligosaccharides with 4-deoxy-alpha-D-galact-4-enuronosyl groups at their non-reducing ends.. In terms of biological role, pectinolytic enzyme consist of four classes of enzymes: pectin lyase, polygalacturonase, pectin methylesterase and rhamnogalacturonase. Among pectinolytic enzymes, pectin lyase is the most important in depolymerization of pectin, since it cleaves internal glycosidic bonds of highly methylated pectins. Favors pectate, the anion, over pectin, the methyl ester. The protein is Probable pectate lyase C (plyC) of Aspergillus terreus (strain NIH 2624 / FGSC A1156).